The primary structure comprises 173 residues: Small ribosomal subunit protein uS5 (173 aa).

In terms of domain architecture, S5 DRBM spans 17–80; it reads WQERVIQIRR…ADGKKQLIDV (64 aa).

This sequence belongs to the universal ribosomal protein uS5 family. In terms of assembly, part of the 30S ribosomal subunit. Contacts proteins S4 and S8.

With S4 and S12 plays an important role in translational accuracy. Its function is as follows. Located at the back of the 30S subunit body where it stabilizes the conformation of the head with respect to the body. The protein is Small ribosomal subunit protein uS5 of Rippkaea orientalis (strain PCC 8801 / RF-1) (Cyanothece sp. (strain PCC 8801)).